The sequence spans 169 residues: Peptidyl-prolyl cis-trans isomerase (169 aa).

Residues 5–168 form the PPIase cyclophilin-type domain; the sequence is FFDMTIGGQP…SEVKIAKCGQ (164 aa).

It belongs to the cyclophilin-type PPIase family.

Its subcellular location is the cytoplasm. The catalysed reaction is [protein]-peptidylproline (omega=180) = [protein]-peptidylproline (omega=0). With respect to regulation, binds cyclosporin A (CsA). CsA mediates some of its effects via an inhibitory action on PPIase. Its function is as follows. PPIases accelerate the folding of proteins. It catalyzes the cis-trans isomerization of proline imidic peptide bonds in oligopeptides. The polypeptide is Peptidyl-prolyl cis-trans isomerase (Unspecified eudicot DB-1992).